A 419-amino-acid chain; its full sequence is UDP-N-acetylglucosamine 1-carboxyvinyltransferase (419 aa).

Residue lysine 22–asparagine 23 participates in phosphoenolpyruvate binding. Arginine 93 is a UDP-N-acetyl-alpha-D-glucosamine binding site. The Proton donor role is filled by cysteine 117. The residue at position 117 (cysteine 117) is a 2-(S-cysteinyl)pyruvic acid O-phosphothioketal. The UDP-N-acetyl-alpha-D-glucosamine site is built by aspartate 307 and isoleucine 329.

The protein belongs to the EPSP synthase family. MurA subfamily.

The protein localises to the cytoplasm. It catalyses the reaction phosphoenolpyruvate + UDP-N-acetyl-alpha-D-glucosamine = UDP-N-acetyl-3-O-(1-carboxyvinyl)-alpha-D-glucosamine + phosphate. It functions in the pathway cell wall biogenesis; peptidoglycan biosynthesis. Its function is as follows. Cell wall formation. Adds enolpyruvyl to UDP-N-acetylglucosamine. The protein is UDP-N-acetylglucosamine 1-carboxyvinyltransferase of Shewanella putrefaciens (strain CN-32 / ATCC BAA-453).